We begin with the raw amino-acid sequence, 309 residues long: Taste receptor type 2 member 43 (309 aa).

M1 is a topological domain (extracellular). Residues 2-22 form a helical membrane-spanning segment; sequence ITFLPIIFSSLVVVTFVIGNF. The Cytoplasmic segment spans residues 23–46; the sequence is ANGFIALVNSIEWFKRQKISFADQ. Residues 47–67 traverse the membrane as a helical segment; the sequence is ILTALAVSRVGLLWVLLLNWY. Residues 68–86 lie on the Extracellular side of the membrane; that stretch reads LTVLNPAFNSVEVRTTAYN. The chain crosses the membrane as a helical span at residues 87–107; that stretch reads IWAVINHFSNWLATSLSIFYL. Topologically, residues 108–126 are cytoplasmic; it reads LKIANFSNFIFLHLKRRVK. Residues 127 to 147 form a helical membrane-spanning segment; sequence SVILVMLLGPLLFLACHLFMI. Topologically, residues 148-178 are extracellular; that stretch reads NMNEIVRTKEFDGNMTWKIKLKSAMYFSNMT. N-linked (GlcNAc...) asparagine glycans are attached at residues N161 and N176. A helical transmembrane segment spans residues 179–199; it reads VTMVANLVPFTLTLLSFLLLI. Residues 200–229 lie on the Cytoplasmic side of the membrane; that stretch reads CSLCKHLKKMQLHGKGSQDPSTKVHIKALQ. Residues 230 to 250 traverse the membrane as a helical segment; that stretch reads TVISFLLLCAIYFLSIMISVW. Residues 251 to 259 lie on the Extracellular side of the membrane; it reads SFGSLENKP. The chain crosses the membrane as a helical span at residues 260-280; it reads VFMFCKAIRFSYPSIHPFILI. Residues 281–309 are Cytoplasmic-facing; it reads WGNKKLKQTFLSVFWQMRYWVKGEKTSSP.

Belongs to the G-protein coupled receptor T2R family.

The protein localises to the membrane. It localises to the cell projection. It is found in the cilium membrane. Gustducin-coupled receptor immplicated in the perception of bitter compounds in the oral cavity and the gastrointestinal tract. Signals through PLCB2 and the calcium-regulated cation channel TRPM5. Activated by the sulfonyl amide sweeteners saccharin and acesulfame K. In airway epithelial cells, binding of bitter compounds increases the intracellular calcium ion concentration and stimulates ciliary beat frequency. May act as chemosensory receptors in airway epithelial cells to detect and eliminate potential noxious agents from the airways. The chain is Taste receptor type 2 member 43 (TAS2R43) from Pan paniscus (Pygmy chimpanzee).